The primary structure comprises 208 residues: Large ribosomal subunit protein bL25 (208 aa).

This sequence belongs to the bacterial ribosomal protein bL25 family. CTC subfamily. Part of the 50S ribosomal subunit; part of the 5S rRNA/L5/L18/L25 subcomplex. Contacts the 5S rRNA. Binds to the 5S rRNA independently of L5 and L18.

This is one of the proteins that binds to the 5S RNA in the ribosome where it forms part of the central protuberance. This is Large ribosomal subunit protein bL25 from Burkholderia thailandensis (strain ATCC 700388 / DSM 13276 / CCUG 48851 / CIP 106301 / E264).